The sequence spans 355 residues: S-adenosylmethionine:tRNA ribosyltransferase-isomerase (355 aa).

Belongs to the QueA family. Monomer.

It is found in the cytoplasm. The catalysed reaction is 7-aminomethyl-7-carbaguanosine(34) in tRNA + S-adenosyl-L-methionine = epoxyqueuosine(34) in tRNA + adenine + L-methionine + 2 H(+). The protein operates within tRNA modification; tRNA-queuosine biosynthesis. Transfers and isomerizes the ribose moiety from AdoMet to the 7-aminomethyl group of 7-deazaguanine (preQ1-tRNA) to give epoxyqueuosine (oQ-tRNA). The sequence is that of S-adenosylmethionine:tRNA ribosyltransferase-isomerase from Aeromonas salmonicida (strain A449).